The primary structure comprises 202 residues: CASP-like protein 2B1 (202 aa).

Topologically, residues 1 to 29 (MSYLGVGVSPGNVPVYHGTNLKVVDRRVR) are cytoplasmic. The helical transmembrane segment at 30–50 (LAELVLRCVICGLGILAAVLV) threads the bilayer. At 51-72 (GTDTQVKVIFTIQKKAKFTDMK) the chain is on the extracellular side. A helical membrane pass occupies residues 73-93 (ALVFLVIANGIAAAYSLIQGL). Residues 94-109 (RCVVSMVRGSVLFSKP) are Cytoplasmic-facing. The chain crosses the membrane as a helical span at residues 110–130 (LAWAIFSGDQVIAYLTLAAVA). Residues 131 to 164 (AAAQSSVFGEFGQPELQWMKICNMYGKFCNQVGE) lie on the Extracellular side of the membrane. Residues 165–185 (GIVSAVGVSLSMVILSGISAF) traverse the membrane as a helical segment. At 186 to 202 (SLFRLYGGNKGTSGGRW) the chain is on the cytoplasmic side.

This sequence belongs to the Casparian strip membrane proteins (CASP) family. In terms of assembly, homodimer and heterodimers.

The protein localises to the cell membrane. This chain is CASP-like protein 2B1, found in Vitis vinifera (Grape).